A 232-amino-acid chain; its full sequence is 2-C-methyl-D-erythritol 4-phosphate cytidylyltransferase (232 aa).

Belongs to the IspD/TarI cytidylyltransferase family. IspD subfamily.

The enzyme catalyses 2-C-methyl-D-erythritol 4-phosphate + CTP + H(+) = 4-CDP-2-C-methyl-D-erythritol + diphosphate. It participates in isoprenoid biosynthesis; isopentenyl diphosphate biosynthesis via DXP pathway; isopentenyl diphosphate from 1-deoxy-D-xylulose 5-phosphate: step 2/6. Its function is as follows. Catalyzes the formation of 4-diphosphocytidyl-2-C-methyl-D-erythritol from CTP and 2-C-methyl-D-erythritol 4-phosphate (MEP). The polypeptide is 2-C-methyl-D-erythritol 4-phosphate cytidylyltransferase (Stenotrophomonas maltophilia (strain R551-3)).